Reading from the N-terminus, the 134-residue chain is Large-conductance mechanosensitive channel (134 aa).

The next 2 membrane-spanning stretches (helical) occupy residues 16–36 (VIDLAVGVVIGAAFGKIVTAL) and 81–101 (GDFINTLIQFVIVAFAIFIVV).

Belongs to the MscL family. As to quaternary structure, homopentamer.

It localises to the cell inner membrane. Functionally, channel that opens in response to stretch forces in the membrane lipid bilayer. May participate in the regulation of osmotic pressure changes within the cell. The protein is Large-conductance mechanosensitive channel of Stenotrophomonas maltophilia (strain K279a).